The sequence spans 262 residues: Small ribosomal subunit protein eS1z (262 aa).

The segment covering 1–18 (MAVGKNKRISKGRKGGKK) has biased composition (basic residues). The segment at 1–21 (MAVGKNKRISKGRKGGKKKAV) is disordered.

This sequence belongs to the eukaryotic ribosomal protein eS1 family. In terms of assembly, component of the small ribosomal subunit. Mature ribosomes consist of a small (40S) and a large (60S) subunit. The 40S subunit contains about 33 different proteins and 1 molecule of RNA (18S). The 60S subunit contains about 49 different proteins and 3 molecules of RNA (25S, 5.8S and 5S).

The protein localises to the cytoplasm. This chain is Small ribosomal subunit protein eS1z, found in Arabidopsis thaliana (Mouse-ear cress).